The primary structure comprises 366 residues: tRNA(Met) cytidine acetate ligase (366 aa).

ATP is bound by residues 7-20, G96, N152, and R175; that span reads IAEF…HQYL.

This sequence belongs to the TmcAL family.

The protein resides in the cytoplasm. It carries out the reaction cytidine(34) in elongator tRNA(Met) + acetate + ATP = N(4)-acetylcytidine(34) in elongator tRNA(Met) + AMP + diphosphate. Its function is as follows. Catalyzes the formation of N(4)-acetylcytidine (ac(4)C) at the wobble position of elongator tRNA(Met), using acetate and ATP as substrates. First activates an acetate ion to form acetyladenylate (Ac-AMP) and then transfers the acetyl group to tRNA to form ac(4)C34. The protein is tRNA(Met) cytidine acetate ligase of Streptococcus equi subsp. zooepidemicus (strain H70).